Consider the following 105-residue polypeptide: Circadian clock oscillator protein KaiB (105 aa).

The protein belongs to the KaiB family. As to quaternary structure, the KaiABC complex composition changes during the circadian cycle to control KaiC phosphorylation. Complexes KaiC(6), KaiA(2-4):KaiC(6), KaiB(6):KaiC(6) and KaiC(6):KaiB(6):KaiA(12) are among the most important forms, many form cooperatively. Undergoes a major conformational rearrangment; in the free state forms homotetramers as a dimer of dimers. When bound to the CI domain of KaiC switches to a monomeric thioredoxin-fold (KaiB(fs)). KaiB(fs) binds CikA, leading it to dephosphorylate phospho-RpaA.

In terms of biological role, key component of the KaiABC oscillator complex, which constitutes the main circadian regulator in cyanobacteria. Complex composition changes during the circadian cycle to control KaiC phosphorylation. KaiA stimulates KaiC autophosphorylation, while KaiB sequesters KaiA, leading to KaiC autodephosphorylation. Phospho-Ser-431 KaiC accumulation triggers binding of KaiB to form the KaiB(6):KaiC(6) complex, leading to changes in output regulators CikA and SasA. KaiB switches to a thioredoxin-like fold (KaiB(fs)) when bound to KaiC. KaiB(6):KaiC(6) formation exposes a site for KaiA binding that sequesters KaiA from KaiC, making the KaiC(6):KaiB(6):KaiA(12) complex that results in KaiC autodephosphorylation. A metamorphic protein which reversibly switches between an inactive tetrameric fold and a rare, thioredoxin-like monomeric fold (KaiB(fs)). KaiB(fs) binds phospho-KaiC, KaiA and CikA. KaiA and CikA compete for binding to KaiB(fs), and KaiB(fs) and SasA compete for binding to KaiC, thus the clock oscillator and output signal pathway are tightly coupled. This Cyanothece sp. (strain PCC 7425 / ATCC 29141) protein is Circadian clock oscillator protein KaiB.